A 556-amino-acid polypeptide reads, in one-letter code: MSVTGNFFSKLRSLALTLEKETAQLEQVFGNEDNEYEEESPMRVLHDLRSDIMVLKGDFQSTLDKKLTRGQELSAFIKACRVLHERSAADIEQIKETFQTYGYKPLCNDNSENEQTQESEKPKDNDVSPRKADAEDLPILEKAASTSWDLLRAPQLSDFGLSHYQLPTAWEPPKVKPCPKNPEEEKPRIMYKDPEPINVAKTPKCALRLEEDFSQIQHFGISDCSTNLNDDYTIALINKNFQKKQNDTENETCQAKNLKSLLATPSHLSHRMDCVDSPLPPVFFTPGLKVHKKETISLPGKTGERQGLNAADTDSTLLSGTCDRKDSDNAHLEDVHECTAMKPAMDLKSISAAPPYLSLGSNFDSVYSPRPPVFCTPGLKTHKKETSSVLVEPKEVTGCSDTPPLPSFQTNWLKNDTTEKALDITEPVPRPELSYRQYLEEPPSLVLNSNKYEAPAMTEYDIGTPTRPEMTVSLTEDLFKYNVKPSSPPKMSEYEKMLWTPIRPEMTSCITEDISQILSKYCDNNTNVADKEMWNKAGASFGKISSEYEDKENRQY.

Residues 105–135 are disordered; the sequence is PLCNDNSENEQTQESEKPKDNDVSPRKADAE. Basic and acidic residues predominate over residues 118–134; sequence ESEKPKDNDVSPRKADA.

The protein belongs to the SKA3 family. Component of the SKA complex, composed of ska1, ska2 and ska3.

It is found in the cytoplasm. Its subcellular location is the cytoskeleton. It localises to the spindle. The protein resides in the chromosome. The protein localises to the centromere. It is found in the kinetochore. Its function is as follows. Component of the SKA complex, a microtubule plus end-binding complex of the outer kinetochore that stabilizes spindle microtubule-kinetochore attachments, promotes alignment of chromosomes at the mitotic spindle equator (chromosome congression) and assists suppression of the spindle assembly checkpoint. Kinetochores, consisting of a centromere-associated inner segment and a microtubule-contacting outer segment, play a crucial role in chromosome segregation by mediating the physical connection between centromeric DNA and spindle microtubules. The outer kinetochore is made up of the ten-subunit KMN network complex, comprising the MIS12, NDC80 and KNL1 complexes, and auxiliary microtubule-associated components such as the SKA complex; together they connect the outer kinetochore with the inner kinetochore, bind microtubules, and mediate interactions with mitotic checkpoint proteins that delay anaphase until chromosomes are bioriented on the spindle. The SKA complex is loaded onto bioriented kinetochores and it facilitates chromosome congression by stabilizing microtubules, and end-on attachment of the NDC80 complex to depolymerizing spindle microtubules, thereby assisting the poleward-moving kinetochore in withstanding microtubule pulling forces. The complex associates with dynamic microtubule plus-ends and can track both depolymerizing and elongating microtubules. The complex recruits protein phosphatase 1 (PP1) to the kinetochore in prometaphase and metaphase, to oppose spindle assembly checkpoint signaling and promote the onset of anaphase. Within the complex, binds microtubules but with a much lower affinity than SKA1. During meiosis the SKA complex stabilizes the meiotic spindle and is required for its migration to the cortex. The sequence is that of SKA complex subunit 3 (ska3) from Xenopus laevis (African clawed frog).